We begin with the raw amino-acid sequence, 632 residues long: tRNA uridine 5-carboxymethylaminomethyl modification enzyme MnmG (632 aa).

Residues 15–20 (GAGHAG), isoleucine 127, and serine 182 contribute to the FAD site. NAD(+) is bound at residue 276–290 (GPRYCPSIEDKIVRF). Glutamine 373 lines the FAD pocket.

Belongs to the MnmG family. Homodimer. Heterotetramer of two MnmE and two MnmG subunits. Requires FAD as cofactor.

The protein localises to the cytoplasm. In terms of biological role, NAD-binding protein involved in the addition of a carboxymethylaminomethyl (cmnm) group at the wobble position (U34) of certain tRNAs, forming tRNA-cmnm(5)s(2)U34. The sequence is that of tRNA uridine 5-carboxymethylaminomethyl modification enzyme MnmG from Streptococcus pyogenes serotype M28 (strain MGAS6180).